Here is a 190-residue protein sequence, read N- to C-terminus: Segregation and condensation protein B (190 aa).

This sequence belongs to the ScpB family. In terms of assembly, homodimer. Homodimerization may be required to stabilize the binding of ScpA to the Smc head domains. Component of a cohesin-like complex composed of ScpA, ScpB and the Smc homodimer, in which ScpA and ScpB bind to the head domain of Smc. The presence of the three proteins is required for the association of the complex with DNA.

It localises to the cytoplasm. Its function is as follows. Participates in chromosomal partition during cell division. May act via the formation of a condensin-like complex containing Smc and ScpA that pull DNA away from mid-cell into both cell halves. The chain is Segregation and condensation protein B from Ruminiclostridium cellulolyticum (strain ATCC 35319 / DSM 5812 / JCM 6584 / H10) (Clostridium cellulolyticum).